Reading from the N-terminus, the 307-residue chain is Synaptophysin (307 aa).

The Cytoplasmic portion of the chain corresponds to 1–19; it reads MDVVNQLVAGGQFRVVKEP. In terms of domain architecture, MARVEL spans 15 to 222; the sequence is VVKEPLGFVK…NLWFVFKETG (208 aa). A helical transmembrane segment spans residues 20 to 43; the sequence is LGFVKVLQWVFAIFAFATCGSYTG. The Vesicular portion of the chain corresponds to 44–101; sequence ELRLSVECANKTESALNIEVEFEYPFRLHQVYFDAPSCVKGGTTKIFLVGDYSSSAEF. An N-linked (GlcNAc...) asparagine glycan is attached at N53. Y75 is modified (phosphotyrosine). A helical transmembrane segment spans residues 102-125; the sequence is FVTVAVFAFLYSMGALATYIFLQN. Residues 126–132 lie on the Cytoplasmic side of the membrane; the sequence is KYRENNK. Residues 133-156 form a helical membrane-spanning segment; that stretch reads GPMMDFLATAVFAFMWLVSSSAWA. The Vesicular portion of the chain corresponds to 157–194; that stretch reads KGLSDVKMATDPENIIKEMPMCRQTGNTCKELRDPVTS. Residues 195–218 form a helical membrane-spanning segment; it reads GLNTSVVFGFLNLVLWVGNLWFVF. Topologically, residues 219-307 are cytoplasmic; that stretch reads KETGWAAPFM…GAPTSFSNQM (89 aa). T221 carries the phosphothreonine modification. Residues 233-307 are disordered; it reads GAPEKQPAPG…GAPTSFSNQM (75 aa). Positions 248 to 258 are enriched in gly residues; sequence AGYGQGPGGYG. Positions 249–298 are repeats, Gly-rich; that stretch reads GYGQGPGGYGPQDSYGPQGGYQPDYGQPASGGGGYGPQGDYGQQGYGQQG. Residues 259–276 show a composition bias toward low complexity; it reads PQDSYGPQGGYQPDYGQP. A phosphotyrosine mark is found at Y273 and Y289. Positions 277-296 are enriched in gly residues; the sequence is ASGGGGYGPQGDYGQQGYGQ.

The protein belongs to the synaptophysin/synaptobrevin family. As to quaternary structure, homohexamer or homotetramer. Interacts with SRCIN1. Interacts with VAMP2; the interaction is inhibited by interaction of VAPM2 with SEPT8. Post-translationally, ubiquitinated; mediated by SIAH1 or SIAH2 and leading to its subsequent proteasomal degradation. Phosphorylated by SRC. In terms of tissue distribution, expressed in the brain with expression in the cerebrum and the cerebellum.

The protein localises to the cytoplasmic vesicle. It is found in the secretory vesicle. Its subcellular location is the synaptic vesicle membrane. It localises to the synapse. The protein resides in the synaptosome. Its function is as follows. Possibly involved in structural functions as organizing other membrane components or in targeting the vesicles to the plasma membrane. Involved in the regulation of short-term and long-term synaptic plasticity. This chain is Synaptophysin (Syp), found in Rattus norvegicus (Rat).